We begin with the raw amino-acid sequence, 267 residues long: Hydroxypyruvate/pyruvate aldolase Bphyt_5830 (267 aa).

Histidine 48 functions as the Proton acceptor in the catalytic mechanism. 2 residues coordinate a divalent metal cation: glutamate 152 and aspartate 178.

It belongs to the HpcH/HpaI aldolase family. The cofactor is a divalent metal cation.

It carries out the reaction D-glyceraldehyde + 3-hydroxypyruvate = 2-dehydro-D-galactonate. The enzyme catalyses D-glyceraldehyde + 3-hydroxypyruvate = (3R,4S,5R)-3,4,5,6-tetrahydroxy-2-oxohexanoate. It catalyses the reaction D-glyceraldehyde + pyruvate = 2-dehydro-3-deoxy-L-galactonate. Its function is as follows. Aldolase which can catalyze in vitro the aldolisation reaction between hydroxypyruvate (HPA) or pyruvate (PA) and D-glyceraldehyde (D-GA). The condensation of hydroxypyruvate and D-glyceraldehyde produces 2-dehydro-D-galactonate as the major product and (3R,4S,5R)-3,4,5,6-tetrahydroxy-2-oxohexanoate. The condensation of pyruvate and D-glyceraldehyde produces 2-dehydro-3-deoxy-L-galactonate. In Paraburkholderia phytofirmans (strain DSM 17436 / LMG 22146 / PsJN) (Burkholderia phytofirmans), this protein is Hydroxypyruvate/pyruvate aldolase Bphyt_5830.